We begin with the raw amino-acid sequence, 238 residues long: Ubiquitin-conjugating enzyme E2 R2 (238 aa).

The UBC core domain maps to 8–174; the sequence is SSQKALMLEL…IRKQVSATKA (167 aa). The active-site Glycyl thioester intermediate is the cysteine 93. An important for ubiquitin transfer region spans residues 98–113; that stretch reads HPPVDDPQSGELPSER. The tract at residues 194–238 is disordered; that stretch reads TKVPSNDNSSDLLYDDLYDDDIDDEDEEEEDADCYDDDDSGNEES. Residues 206 to 238 are compositionally biased toward acidic residues; sequence LYDDLYDDDIDDEDEEEEDADCYDDDDSGNEES. Serine 233 carries the phosphoserine; by CK2 modification.

It belongs to the ubiquitin-conjugating enzyme family. As to quaternary structure, interacts with multiple Cul1-RING E3 ubiquitin-protein ligase complexes, also known as SCF (SKP1-CUL1-F-box protein) complexes, including SCF(FBXW7) and SCF(BTRC). Interacts with multiple Cul2-RING (CRL2) E3 ubiquitin-protein ligase complexes, also known as ECS (Elongin BC-CUL2/5-SOCS-box protein) complexes, including CRL2(FEM1C) and ECS(VHL). When phosphorylated, interacts with beta-TrCP (BTRC).

The enzyme catalyses S-ubiquitinyl-[E1 ubiquitin-activating enzyme]-L-cysteine + [E2 ubiquitin-conjugating enzyme]-L-cysteine = [E1 ubiquitin-activating enzyme]-L-cysteine + S-ubiquitinyl-[E2 ubiquitin-conjugating enzyme]-L-cysteine.. It functions in the pathway protein modification; protein ubiquitination. Its activity is regulated as follows. Neddylation of CUL2 in the CRL2(FEM1C) E3 ligase complex increases substrate affinity of UBE2R2 and the ubiquitin-transfer rate in the E2-E3 complex. Its function is as follows. E2 ubiquitin-conjugating enzyme that accepts ubiquitin from an E1 ubiquitin-activating protein, and catalyzes its covalent attachment to other proteins by an E3 ubiquitin-protein ligase complex. In vitro catalyzes monoubiquitination and 'Lys-48'-linked polyubiquitination. Works in collaboration with various Cul1-RING and Cul2-RING E3 ligase complexes. May be involved in degradation of katenin. This chain is Ubiquitin-conjugating enzyme E2 R2 (UBE2R2), found in Homo sapiens (Human).